The sequence spans 326 residues: MISIGVYIHTRSEYPLRWASTEGHVEVVIYLVENGADLNVLKLFYVDKYLQVVKYLIENGSNIHVDDEFTLIYASKGGYLELVNLLIKNGADIHVNDDAPLKWASKNGHLEVVKYLVENGADIHAYNELVVYASEGGHLQIVKYLVKKGADIHAEDDEALKWASRSGHLEVVKYLVEKGANFRAENDYALRWACEKGHLEIVKYLVEKGADIHAEDEYALRWASRSGHLEVVKYLVENGADIHACNDYGLRKASRNRHLNVVKYLMENGANIHAKDDYALRLASVNGHFKLVKFLVENGANIHAKNNEALIRPLGEGHIKIVTYLE.

ANK repeat units follow at residues 11–40 (RSEY…DLNV), 42–65 (KLFY…NIHV), 66–95 (DDEF…DIHV), 96–125 (NDDA…DIHA), 127–154 (NELV…DIHA), 155–184 (EDDE…NFRA), 185–214 (ENDY…DIHA), 216–244 (DEYA…DIHA), 246–274 (NDYG…NIHA), and 275–304 (KDDY…NIHA).

The sequence is that of Putative ankyrin repeat protein L25 from Acanthamoeba polyphaga mimivirus (APMV).